The chain runs to 598 residues: NADH-quinone oxidoreductase subunit C/D (598 aa).

The NADH dehydrogenase I subunit C stretch occupies residues M1 to L190. The tract at residues D214–R598 is NADH dehydrogenase I subunit D.

This sequence in the N-terminal section; belongs to the complex I 30 kDa subunit family. It in the C-terminal section; belongs to the complex I 49 kDa subunit family. In terms of assembly, NDH-1 is composed of 13 different subunits. Subunits NuoB, CD, E, F, and G constitute the peripheral sector of the complex.

The protein localises to the cell inner membrane. It carries out the reaction a quinone + NADH + 5 H(+)(in) = a quinol + NAD(+) + 4 H(+)(out). In terms of biological role, NDH-1 shuttles electrons from NADH, via FMN and iron-sulfur (Fe-S) centers, to quinones in the respiratory chain. The immediate electron acceptor for the enzyme in this species is believed to be ubiquinone. Couples the redox reaction to proton translocation (for every two electrons transferred, four hydrogen ions are translocated across the cytoplasmic membrane), and thus conserves the redox energy in a proton gradient. The chain is NADH-quinone oxidoreductase subunit C/D from Shewanella woodyi (strain ATCC 51908 / MS32).